We begin with the raw amino-acid sequence, 112 residues long: UPF0342 protein SSA_1465 (112 aa).

It belongs to the UPF0342 family.

The chain is UPF0342 protein SSA_1465 from Streptococcus sanguinis (strain SK36).